We begin with the raw amino-acid sequence, 559 residues long: Aminopeptidase Q (559 aa).

The Cytoplasmic segment spans residues 1–13 (MSRPFSSGVYVSR). A helical; Signal-anchor for type II membrane protein membrane pass occupies residues 14 to 34 (GVALLLAALTAVLLLVLVALA). Residues 35 to 559 (SLYGSCAHVQ…VPFRHFLAEH (525 aa)) are Lumenal-facing. Residues Asn-121 and Asn-129 are each glycosylated (N-linked (GlcNAc...) asparagine). A substrate-binding site is contributed by Glu-237. Asn-258, Asn-285, and Asn-343 each carry an N-linked (GlcNAc...) asparagine glycan. 376–380 (GAMEN) contacts substrate. His-412 lines the Zn(2+) pocket. Glu-413 acts as the Proton acceptor in catalysis. Zn(2+) is bound by residues His-416 and Glu-435.

Belongs to the peptidase M1 family. As to quaternary structure, homodimer. The cofactor is Zn(2+). N-glycosylated.

Its subcellular location is the membrane. Inhibited by bestatin. In terms of biological role, metalloprotease which may be important for placentation by regulating biological activity of key peptides at the embryo-maternal interface. On synthetic substrates it shows a marked preference for Leu-4-methylcoumaryl-7-amide (Leu-MCA) over Met-MCA, Arg-LCA and Lys-LCA. Cleaves the N-terminal amino acid of several peptides such as angiotensin-3, kisspeptin-10 and endokinin C. This Mus musculus (Mouse) protein is Aminopeptidase Q.